Reading from the N-terminus, the 263-residue chain is ATP synthase subunit b 2 (263 aa).

A helical membrane pass occupies residues 2 to 22 (LIDPLTVVAQIINFLILVALL).

This sequence belongs to the ATPase B chain family. As to quaternary structure, F-type ATPases have 2 components, F(1) - the catalytic core - and F(0) - the membrane proton channel. F(1) has five subunits: alpha(3), beta(3), gamma(1), delta(1), epsilon(1). F(0) has four main subunits: a(1), b(1), b'(1) and c(10-14). The alpha and beta chains form an alternating ring which encloses part of the gamma chain. F(1) is attached to F(0) by a central stalk formed by the gamma and epsilon chains, while a peripheral stalk is formed by the delta, b and b' chains.

It localises to the cellular thylakoid membrane. Its function is as follows. F(1)F(0) ATP synthase produces ATP from ADP in the presence of a proton or sodium gradient. F-type ATPases consist of two structural domains, F(1) containing the extramembraneous catalytic core and F(0) containing the membrane proton channel, linked together by a central stalk and a peripheral stalk. During catalysis, ATP synthesis in the catalytic domain of F(1) is coupled via a rotary mechanism of the central stalk subunits to proton translocation. Functionally, component of the F(0) channel, it forms part of the peripheral stalk, linking F(1) to F(0). In Acaryochloris marina (strain MBIC 11017), this protein is ATP synthase subunit b 2.